The primary structure comprises 704 residues: Elongation factor G 1 (704 aa).

Residues 8–290 (ERYRNIGICA…CVVEYMPAPT (283 aa)) enclose the tr-type G domain. GTP-binding positions include 17 to 24 (AHVDAGKT), 88 to 92 (DTPGH), and 142 to 145 (NKMD).

This sequence belongs to the TRAFAC class translation factor GTPase superfamily. Classic translation factor GTPase family. EF-G/EF-2 subfamily.

Its subcellular location is the cytoplasm. In terms of biological role, catalyzes the GTP-dependent ribosomal translocation step during translation elongation. During this step, the ribosome changes from the pre-translocational (PRE) to the post-translocational (POST) state as the newly formed A-site-bound peptidyl-tRNA and P-site-bound deacylated tRNA move to the P and E sites, respectively. Catalyzes the coordinated movement of the two tRNA molecules, the mRNA and conformational changes in the ribosome. This Pseudoalteromonas translucida (strain TAC 125) protein is Elongation factor G 1.